The following is a 118-amino-acid chain: Large ribosomal subunit protein uL18 (118 aa).

The protein belongs to the universal ribosomal protein uL18 family. In terms of assembly, part of the 50S ribosomal subunit; part of the 5S rRNA/L5/L18/L25 subcomplex. Contacts the 5S and 23S rRNAs.

Functionally, this is one of the proteins that bind and probably mediate the attachment of the 5S RNA into the large ribosomal subunit, where it forms part of the central protuberance. The polypeptide is Large ribosomal subunit protein uL18 (Caulobacter sp. (strain K31)).